Here is a 429-residue protein sequence, read N- to C-terminus: MFCTINQKAVQPAKPSDTTTPQYPADFFNKNNHQKPTVRVTQRGYKIQELREIISNGIVQDDLNSHHVVRYMELIMEDITDTLDEDWNSFGVKIGRKGDKITPLSLVNVMIEEDELIDGKRNNGVNKKDDKWIMLVITSYYRFAFSQNQNHRSNLITKLNLQLRTFLKDPPTIVDNMGLFTSLISNINFTKLISALDMFLNRFKNNDWSYLRFGTIASRYKDCSALMSLSHVCDVTGMKMEEFMDWIFVYSTGEDMIKLMKEGNEIDNPMSYMPYTMSMGLSTKSPYSSINCPSIYSFIHMLGSFLGSERSRNARMVSENNIVNLKVNAGVVSYVKSHRASMIKAFISNDVKEQWYNNDDNDNENGGDDESDEELDEMPKGDNPVEWFMYLESRHFELPEEIKNFMNREARKITNPRVGTIGKFVSTMN.

Residues Trp355–Met378 are disordered. Residues Asp359–Asp376 show a composition bias toward acidic residues.

This sequence belongs to the ephemerovirus nucleocapsid protein family. In terms of assembly, homomultimerizes to form the nucleocapsid. Binds to viral genomic RNA.

Its subcellular location is the virion. It is found in the host cytoplasm. In terms of biological role, encapsidates the genome, protecting it from nucleases. If expressed without protein P it binds non-specifically RNA and therefore can bind it's own mRNA. Interaction with protein P abolishes any non-specific RNA binding, and prevents phosphorylation. The soluble N-P complex encapsidates specifically the genomic RNA, with protein N protecting the genome like a pearl necklace. The encapsidated genomic RNA is termed the nucleocapsid (NC) and serves as template for viral transcription and replication. Protein N binds protein P in the NC through a different interaction, and can be phosphorylated. Subsequent viral replication is dependent on intracellular concentration of newly synthesized protein N. During replication, encapsidation by protein N is coupled to RNA synthesis and all replicative products are resistant to nucleases. This is Nucleoprotein (N) from Adelaide River virus (ARV).